Consider the following 531-residue polypeptide: UDP-glucuronosyltransferase 1A6 (531 aa).

Residues 1 to 26 form the signal peptide; the sequence is MACLLPAAQTLPAGFLFLVLWASVLG. Residues Asn293 and Asn431 are each glycosylated (N-linked (GlcNAc...) asparagine). The chain crosses the membrane as a helical span at residues 489–505; the sequence is VIGFLLAIVLTVVFIVF.

This sequence belongs to the UDP-glycosyltransferase family. Expressed in liver, kidney and at very low levels in colon.

The protein resides in the microsome. It is found in the endoplasmic reticulum membrane. The catalysed reaction is glucuronate acceptor + UDP-alpha-D-glucuronate = acceptor beta-D-glucuronoside + UDP + H(+). It carries out the reaction (5Z,8Z,11Z,14Z)-eicosatetraenoate + UDP-alpha-D-glucuronate = O-[(5Z),(8Z),(11Z),(14Z)-eicosatetraenoyl]-beta-D-glucuronate + UDP. It catalyses the reaction 15-hydroxy-(5Z,8Z,11Z,13E)-eicosatetraenoate + UDP-alpha-D-glucuronate = 15-O-(beta-D-glucuronosyl)-(5Z,8Z,11Z,14Z)-eicosatetraenoate + UDP + H(+). The enzyme catalyses (E)-ferulate + UDP-alpha-D-glucuronate = (E)-4-O-(beta-D-glucuronosyl)-ferulate + UDP + H(+). The catalysed reaction is (E)-ferulate + UDP-alpha-D-glucuronate = (E)-ferulic acid beta-D-glucuronate ester + UDP. Functionally, UDP-glucuronosyltransferase (UGT) that catalyzes phase II biotransformation reactions in which lipophilic substrates are conjugated with glucuronic acid to facilitate their inactivation and excretion from the body. Essential for the elimination and detoxification of drugs, xenobiotics and endogenous compounds. Involved in the glucuronidation of arachidonic acid (AA) and AA-derived eicosanoids including 15-HETE and 20-HETE. Conjugates small planar phenolic molecules such as 4-nitrophenol, 1-naphthol, and 4-methylumbelliferone. The bulky phenol 4-hydroxybiphenyl, androgens and estrogens are not substrates. 2-hydroxybiphenyl is an excellent substrate. Involved in the glucuronidation of the phytochemical ferulic acid at the phenolic or the carboxylic acid group. This Mus musculus (Mouse) protein is UDP-glucuronosyltransferase 1A6.